The chain runs to 278 residues: Type II restriction enzyme NgoPII (278 aa).

This sequence belongs to the NgoPII type II restriction endonuclease family.

It catalyses the reaction Endonucleolytic cleavage of DNA to give specific double-stranded fragments with terminal 5'-phosphates.. Functionally, a P subtype restriction enzyme that recognizes the double-stranded sequence 5'-GGCC-3' and cleaves after G-2. This chain is Type II restriction enzyme NgoPII (ngoPIIR), found in Neisseria gonorrhoeae.